A 489-amino-acid polypeptide reads, in one-letter code: 3-octaprenyl-4-hydroxybenzoate carboxy-lyase (489 aa).

Residue N172 participates in Mn(2+) binding. Prenylated FMN-binding positions include 175-177 (IYR), 189-191 (RWL), and 194-195 (RG). A Mn(2+)-binding site is contributed by E238. The Proton donor role is filled by D287.

The protein belongs to the UbiD family. In terms of assembly, homohexamer. Prenylated FMN is required as a cofactor. It depends on Mn(2+) as a cofactor.

It is found in the cell membrane. The enzyme catalyses a 4-hydroxy-3-(all-trans-polyprenyl)benzoate + H(+) = a 2-(all-trans-polyprenyl)phenol + CO2. The protein operates within cofactor biosynthesis; ubiquinone biosynthesis. Its function is as follows. Catalyzes the decarboxylation of 3-octaprenyl-4-hydroxy benzoate to 2-octaprenylphenol, an intermediate step in ubiquinone biosynthesis. The sequence is that of 3-octaprenyl-4-hydroxybenzoate carboxy-lyase from Aeromonas hydrophila subsp. hydrophila (strain ATCC 7966 / DSM 30187 / BCRC 13018 / CCUG 14551 / JCM 1027 / KCTC 2358 / NCIMB 9240 / NCTC 8049).